A 121-amino-acid polypeptide reads, in one-letter code: Large ribosomal subunit protein bL12 (121 aa).

This sequence belongs to the bacterial ribosomal protein bL12 family. As to quaternary structure, homodimer. Part of the ribosomal stalk of the 50S ribosomal subunit. Forms a multimeric L10(L12)X complex, where L10 forms an elongated spine to which 2 to 4 L12 dimers bind in a sequential fashion. Binds GTP-bound translation factors.

Forms part of the ribosomal stalk which helps the ribosome interact with GTP-bound translation factors. Is thus essential for accurate translation. The chain is Large ribosomal subunit protein bL12 from Shewanella pealeana (strain ATCC 700345 / ANG-SQ1).